A 398-amino-acid chain; its full sequence is tRNA-specific 2-thiouridylase MnmA (398 aa).

ATP is bound by residues 18–25 (AMSGGVDS) and Leu44. Cys112 functions as the Nucleophile in the catalytic mechanism. The cysteines at positions 112 and 213 are disulfide-linked. Position 136 (Gly136) interacts with ATP. Residues 163–165 (RDQ) are interaction with tRNA. The Cysteine persulfide intermediate role is filled by Cys213.

This sequence belongs to the MnmA/TRMU family.

The protein resides in the cytoplasm. It catalyses the reaction S-sulfanyl-L-cysteinyl-[protein] + uridine(34) in tRNA + AH2 + ATP = 2-thiouridine(34) in tRNA + L-cysteinyl-[protein] + A + AMP + diphosphate + H(+). In terms of biological role, catalyzes the 2-thiolation of uridine at the wobble position (U34) of tRNA, leading to the formation of s(2)U34. This is tRNA-specific 2-thiouridylase MnmA from Sinorhizobium fredii (strain NBRC 101917 / NGR234).